A 393-amino-acid chain; its full sequence is Acetylornithine aminotransferase 1 (393 aa).

A N(2)-acetyl-L-ornithine-binding site is contributed by Arg-131. 215 to 218 (DEVQ) is a binding site for pyridoxal 5'-phosphate. The residue at position 244 (Lys-244) is an N6-(pyridoxal phosphate)lysine. Thr-272 is a binding site for N(2)-acetyl-L-ornithine. Thr-273 is a binding site for pyridoxal 5'-phosphate.

Belongs to the class-III pyridoxal-phosphate-dependent aminotransferase family. ArgD subfamily. Homodimer. The cofactor is pyridoxal 5'-phosphate.

Its subcellular location is the cytoplasm. The enzyme catalyses N(2)-acetyl-L-ornithine + 2-oxoglutarate = N-acetyl-L-glutamate 5-semialdehyde + L-glutamate. Its pathway is amino-acid biosynthesis; L-arginine biosynthesis; N(2)-acetyl-L-ornithine from L-glutamate: step 4/4. The polypeptide is Acetylornithine aminotransferase 1 (Bordetella bronchiseptica (strain ATCC BAA-588 / NCTC 13252 / RB50) (Alcaligenes bronchisepticus)).